An 83-amino-acid polypeptide reads, in one-letter code: Sulfur carrier protein TusA (83 aa).

Residue Cys-19 is the Cysteine persulfide intermediate of the active site.

The protein belongs to the sulfur carrier protein TusA family.

It localises to the cytoplasm. Sulfur carrier protein which probably makes part of a sulfur-relay system. This Vibrio atlanticus (strain LGP32) (Vibrio splendidus (strain Mel32)) protein is Sulfur carrier protein TusA.